Here is a 698-residue protein sequence, read N- to C-terminus: Polyribonucleotide nucleotidyltransferase (698 aa).

Mg(2+)-binding residues include aspartate 485 and aspartate 491. The KH domain maps to 552–611; that stretch reads PRIHTIKINTDKIRDVIGKGGAVIRSLCEETGTTIEIEDDGTVKIAATSGEQADDAINRI. In terms of domain architecture, S1 motif spans 621 to 689; that stretch reads GTIYTGKVVR…RQGRVRLSIK (69 aa).

This sequence belongs to the polyribonucleotide nucleotidyltransferase family. Component of the RNA degradosome, which is a multiprotein complex involved in RNA processing and mRNA degradation. Mg(2+) serves as cofactor.

The protein resides in the cytoplasm. The catalysed reaction is RNA(n+1) + phosphate = RNA(n) + a ribonucleoside 5'-diphosphate. Its function is as follows. Involved in mRNA degradation. Catalyzes the phosphorolysis of single-stranded polyribonucleotides processively in the 3'- to 5'-direction. The polypeptide is Polyribonucleotide nucleotidyltransferase (Psychromonas ingrahamii (strain DSM 17664 / CCUG 51855 / 37)).